Consider the following 554-residue polypeptide: uncharacterized protein (554 aa).

2 residues coordinate Ca(2+): Asp-327 and Asn-328.

Belongs to the sulfatase family. It depends on Ca(2+) as a cofactor.

The protein resides in the cytoplasm. It localises to the nucleus. This is an uncharacterized protein from Schizosaccharomyces pombe (strain 972 / ATCC 24843) (Fission yeast).